The sequence spans 485 residues: ATP synthase subunit beta 2 (485 aa).

The segment covering 1-10 (MSGMGEKSEQ) has biased composition (basic and acidic residues). Residues 1 to 27 (MSGMGEKSEQISKSARSTDPQEQESVA) are disordered. A compositionally biased stretch (polar residues) spans 11 to 24 (ISKSARSTDPQEQE). Residue 177 to 184 (GGAGVGKT) participates in ATP binding.

Belongs to the ATPase alpha/beta chains family. F-type ATPases have 2 components, CF(1) - the catalytic core - and CF(0) - the membrane proton channel. CF(1) has five subunits: alpha(3), beta(3), gamma(1), delta(1), epsilon(1). CF(0) has three main subunits: a(1), b(2) and c(9-12). The alpha and beta chains form an alternating ring which encloses part of the gamma chain. CF(1) is attached to CF(0) by a central stalk formed by the gamma and epsilon chains, while a peripheral stalk is formed by the delta and b chains.

It is found in the cell inner membrane. It catalyses the reaction ATP + H2O + 4 H(+)(in) = ADP + phosphate + 5 H(+)(out). Its function is as follows. Produces ATP from ADP in the presence of a proton gradient across the membrane. The catalytic sites are hosted primarily by the beta subunits. This chain is ATP synthase subunit beta 2, found in Nitrosomonas eutropha (strain DSM 101675 / C91 / Nm57).